Reading from the N-terminus, the 601-residue chain is MENQAHTTAGASPCEAELQELMEQIDIMVSNKKLDWERKMRALETRLDLRDQELANAQTCLDQKGQEVGLLRQKLDSLEKCNLVMTQNYEGQLQTLKAQFSKLTNNFEKLRLHQMKQNQSHRKEASNKDETPFELSSLNQKIEEFRAKSREWDKQEILYQTHLVSLDAQQKLLSEKCNQFQKQAQNYQTQLNGKQQRPEDSSPETPRLVCESSPGCEATQRDEFIIEKLKSAVSEIALSRNKLQDENQKLLQELKMYQRQCQAMEAGLSEVKNELQSRDDLLRIIEMERLHLHRELLKMGELQTVQDNRKRVESSYSPSTKEPERKRKELFSVVSDQPNHEKELNKMRSQLYQEEDLCSEQERMRNEISELTQELHQKEVTIATIMKKAALLERQLKIELEIKEKMLAKQQISDRRYKAVRTENTHLKGMMGDLDPARYLTVDFSNKEHSRHTSINKLEYENERLRSDLAKLHINGKAAWSNQSSYEGAGAYIYQSQLKTETGGDRISEDCEMNRSPTPLSPLPFQTKEMTSPLAGDNEVLPLSPPDISFRASLAAQHFLMEEEKRAKELEKLLNTHIDELQRHTEFTLNKYTKLKQSRHI.

Coiled coils occupy residues 14-59 (CEAE…NAQT), 86-197 (TQNY…KQQR), and 226-278 (IEKL…LQSR). 2 disordered regions span residues 115-135 (MKQNQSHRKEASNKDETPFEL) and 188-213 (QTQLNGKQQRPEDSSPETPRLVCESS). Residues 121-131 (HRKEASNKDET) show a composition bias toward basic and acidic residues. The disordered stretch occupies residues 307-326 (DNRKRVESSYSPSTKEPERK). Residues 340–397 (HEKELNKMRSQLYQEEDLCSEQERMRNEISELTQELHQKEVTIATIMKKAALLERQLK) are a coiled coil. A Phosphoserine modification is found at Ser544. Positions 555–586 (AAQHFLMEEEKRAKELEKLLNTHIDELQRHTE) form a coiled coil.

Belongs to the CEP63 family. In terms of assembly, interacts with CEP152; the interaction is mutually exclusive with CEP63.

The protein localises to the cytoplasm. Key structural component of the deuterosome, a structure that promotes de novo centriole amplification in multiciliated cells. Deuterosome-mediated centriole amplification occurs in terminally differentiated multiciliated cells and can generate more than 100 centrioles. Probably sufficient for the specification and formation of the deuterosome inner core. Interacts with CEP152 and recruits PLK4 to activate centriole biogenesis. The polypeptide is Deuterosome assembly protein 1 (Rattus norvegicus (Rat)).